The primary structure comprises 156 residues: Cyclic pyranopterin monophosphate synthase (156 aa).

Substrate is bound by residues 75 to 77 and 111 to 112; these read LCH and ME. Aspartate 126 is a catalytic residue.

This sequence belongs to the MoaC family. Homohexamer; trimer of dimers.

The catalysed reaction is (8S)-3',8-cyclo-7,8-dihydroguanosine 5'-triphosphate = cyclic pyranopterin phosphate + diphosphate. It participates in cofactor biosynthesis; molybdopterin biosynthesis. Functionally, catalyzes the conversion of (8S)-3',8-cyclo-7,8-dihydroguanosine 5'-triphosphate to cyclic pyranopterin monophosphate (cPMP). The protein is Cyclic pyranopterin monophosphate synthase of Corynebacterium glutamicum (strain R).